The sequence spans 481 residues: uncharacterized protein (481 aa).

The next 13 helical transmembrane spans lie at 3 to 23, 33 to 53, 75 to 95, 99 to 119, 122 to 142, 155 to 175, 196 to 216, 241 to 261, 264 to 284, 303 to 323, 351 to 371, 400 to 420, and 443 to 463; these read YLPM…LLHG, FITA…YYYF, QAII…GMGE, NNMF…IVLA, IFNL…LVFL, YMIM…FLLA, IYGG…LPPF, FVLV…DYFA, HAVL…MALL, VATG…FHAI, GGLL…KLAI, IIMI…FYLI, and VFSL…PDIV.

The protein resides in the cell membrane. This is an uncharacterized protein from Methanocaldococcus jannaschii (strain ATCC 43067 / DSM 2661 / JAL-1 / JCM 10045 / NBRC 100440) (Methanococcus jannaschii).